The following is a 306-amino-acid chain: Tyrosine recombinase XerC (306 aa).

The Core-binding (CB) domain occupies 6-92 (NTLYLQTKPY…ALRQWFSYLI (87 aa)). The 180-residue stretch at 113-292 (RLPKNIDAEQ…DFQHLAKIYD (180 aa)) folds into the Tyr recombinase domain. Residues Arg152, Lys176, His244, Arg247, and His270 contribute to the active site. Tyr279 serves as the catalytic O-(3'-phospho-DNA)-tyrosine intermediate.

This sequence belongs to the 'phage' integrase family. XerC subfamily. Forms a cyclic heterotetrameric complex composed of two molecules of XerC and two molecules of XerD.

The protein localises to the cytoplasm. In terms of biological role, site-specific tyrosine recombinase, which acts by catalyzing the cutting and rejoining of the recombining DNA molecules. The XerC-XerD complex is essential to convert dimers of the bacterial chromosome into monomers to permit their segregation at cell division. It also contributes to the segregational stability of plasmids. This is Tyrosine recombinase XerC from Actinobacillus pleuropneumoniae serotype 7 (strain AP76).